Reading from the N-terminus, the 295-residue chain is Small ribosomal subunit protein uS2 (295 aa).

The segment at 232 to 295 (RRRGTDEKPE…DEQPAAAAAE (64 aa)) is disordered. A compositionally biased stretch (basic and acidic residues) spans 252-287 (EWERELLEEPKKSDEQPAKSDELPVKTDEQPTKSDE).

Belongs to the universal ribosomal protein uS2 family.

The polypeptide is Small ribosomal subunit protein uS2 (Salinispora tropica (strain ATCC BAA-916 / DSM 44818 / JCM 13857 / NBRC 105044 / CNB-440)).